The primary structure comprises 161 residues: MTSKAIYPGTFDPMTNGHLDLVTRASLMFDHVILAIAASPSKKPLFSLDERVALATQVTSHLDNVEVLGFSELMAHFAAHQNANILVRGLRAVSDFEYELQLANMNRHLMPTLESVFLMPSEEWSFISSSLVKEVARHGGDIAPFLPDVVTQALMAKLAAA.

Thr10 serves as a coordination point for substrate. ATP is bound by residues 10–11 and His18; that span reads TF. Substrate is bound by residues Lys42, Met74, and Arg88. ATP is bound by residues 89 to 91, Glu99, and 124 to 130; these read GLR and WSFISSS.

The protein belongs to the bacterial CoaD family. In terms of assembly, homohexamer. Mg(2+) is required as a cofactor.

It localises to the cytoplasm. The catalysed reaction is (R)-4'-phosphopantetheine + ATP + H(+) = 3'-dephospho-CoA + diphosphate. It functions in the pathway cofactor biosynthesis; coenzyme A biosynthesis; CoA from (R)-pantothenate: step 4/5. Its function is as follows. Reversibly transfers an adenylyl group from ATP to 4'-phosphopantetheine, yielding dephospho-CoA (dPCoA) and pyrophosphate. This is Phosphopantetheine adenylyltransferase from Serratia marcescens.